The primary structure comprises 905 residues: Alanine--tRNA ligase (905 aa).

Residues H595, H599, C696, and H700 each contribute to the Zn(2+) site.

Belongs to the class-II aminoacyl-tRNA synthetase family. Requires Zn(2+) as cofactor.

The protein resides in the cytoplasm. The enzyme catalyses tRNA(Ala) + L-alanine + ATP = L-alanyl-tRNA(Ala) + AMP + diphosphate. Catalyzes the attachment of alanine to tRNA(Ala) in a two-step reaction: alanine is first activated by ATP to form Ala-AMP and then transferred to the acceptor end of tRNA(Ala). Also edits incorrectly charged Ser-tRNA(Ala) and Gly-tRNA(Ala) via its editing domain. This is Alanine--tRNA ligase from Anaeromyxobacter dehalogenans (strain 2CP-C).